A 309-amino-acid chain; its full sequence is Sulfate adenylyltransferase subunit 2 (309 aa).

It belongs to the PAPS reductase family. CysD subfamily. In terms of assembly, heterodimer composed of CysD, the smaller subunit, and CysN.

It carries out the reaction sulfate + ATP + H(+) = adenosine 5'-phosphosulfate + diphosphate. It participates in sulfur metabolism; hydrogen sulfide biosynthesis; sulfite from sulfate: step 1/3. In terms of biological role, with CysN forms the ATP sulfurylase (ATPS) that catalyzes the adenylation of sulfate producing adenosine 5'-phosphosulfate (APS) and diphosphate, the first enzymatic step in sulfur assimilation pathway. APS synthesis involves the formation of a high-energy phosphoric-sulfuric acid anhydride bond driven by GTP hydrolysis by CysN coupled to ATP hydrolysis by CysD. This Mycobacterium sp. (strain KMS) protein is Sulfate adenylyltransferase subunit 2.